The chain runs to 752 residues: Phosphoribosylformylglycinamidine synthase subunit PurL (752 aa).

Histidine 58 is an active-site residue. ATP contacts are provided by tyrosine 61 and lysine 103. Position 105 (glutamate 105) interacts with Mg(2+). Substrate-binding positions include 106 to 109 (SHNH) and arginine 128. Catalysis depends on histidine 107, which acts as the Proton acceptor. Aspartate 129 provides a ligand contact to Mg(2+). Position 253 (glutamine 253) interacts with substrate. Mg(2+) is bound at residue aspartate 281. Substrate is bound at residue 325-327 (ESQ). Positions 513 and 550 each coordinate ATP. Asparagine 551 lines the Mg(2+) pocket. Serine 553 serves as a coordination point for substrate.

It belongs to the FGAMS family. In terms of assembly, monomer. Part of the FGAM synthase complex composed of 1 PurL, 1 PurQ and 2 PurS subunits.

The protein resides in the cytoplasm. It catalyses the reaction N(2)-formyl-N(1)-(5-phospho-beta-D-ribosyl)glycinamide + L-glutamine + ATP + H2O = 2-formamido-N(1)-(5-O-phospho-beta-D-ribosyl)acetamidine + L-glutamate + ADP + phosphate + H(+). The protein operates within purine metabolism; IMP biosynthesis via de novo pathway; 5-amino-1-(5-phospho-D-ribosyl)imidazole from N(2)-formyl-N(1)-(5-phospho-D-ribosyl)glycinamide: step 1/2. In terms of biological role, part of the phosphoribosylformylglycinamidine synthase complex involved in the purines biosynthetic pathway. Catalyzes the ATP-dependent conversion of formylglycinamide ribonucleotide (FGAR) and glutamine to yield formylglycinamidine ribonucleotide (FGAM) and glutamate. The FGAM synthase complex is composed of three subunits. PurQ produces an ammonia molecule by converting glutamine to glutamate. PurL transfers the ammonia molecule to FGAR to form FGAM in an ATP-dependent manner. PurS interacts with PurQ and PurL and is thought to assist in the transfer of the ammonia molecule from PurQ to PurL. The protein is Phosphoribosylformylglycinamidine synthase subunit PurL of Streptomyces avermitilis (strain ATCC 31267 / DSM 46492 / JCM 5070 / NBRC 14893 / NCIMB 12804 / NRRL 8165 / MA-4680).